We begin with the raw amino-acid sequence, 324 residues long: RING-H2 finger protein ATL3 (324 aa).

The helical transmembrane segment at 24–44 threads the bilayer; the sequence is IILTAIIVLFMAVLFVLILHL. The RING-type; atypical zinc-finger motif lies at 127–169; sequence CSICLSELVKGDKARLLPKCNHSFHVECIDMWFQSHSTCPICR. Disordered stretches follow at residues 179–210, 226–248, and 299–324; these read SSKR…STSS, VSTG…ASQS, and RDKR…SVDP. 2 stretches are compositionally biased toward polar residues: residues 192–210 and 226–235; these read NAGT…STSS and VSTGNTNVGT. Residues 306–324 are compositionally biased toward low complexity; the sequence is SNSSTSNSSSSNAVASVDP.

Belongs to the RING-type zinc finger family. ATL subfamily.

It is found in the membrane. It carries out the reaction S-ubiquitinyl-[E2 ubiquitin-conjugating enzyme]-L-cysteine + [acceptor protein]-L-lysine = [E2 ubiquitin-conjugating enzyme]-L-cysteine + N(6)-ubiquitinyl-[acceptor protein]-L-lysine.. It functions in the pathway protein modification; protein ubiquitination. The protein is RING-H2 finger protein ATL3 (ATL3) of Arabidopsis thaliana (Mouse-ear cress).